We begin with the raw amino-acid sequence, 378 residues long: Outer membrane protein (378 aa).

An N-terminal signal peptide occupies residues 1 to 22; it reads MRLRTALLATTLMAAAPVAANA. Positions 258-378 constitute an OmpA-like domain; that stretch reads PPAPTPARTY…QNRRVEIILH (121 aa).

Its subcellular location is the cell outer membrane. Functionally, growth enhancer. The protein is Outer membrane protein of Gluconacetobacter diazotrophicus (strain ATCC 49037 / DSM 5601 / CCUG 37298 / CIP 103539 / LMG 7603 / PAl5).